Reading from the N-terminus, the 912-residue chain is Protein translocase subunit SecA (912 aa).

Residues Gln87, 105–109, and Asp499 each bind ATP; that span reads GEGKT. Residues Cys897, Cys899, Cys908, and His909 each coordinate Zn(2+).

The protein belongs to the SecA family. Monomer and homodimer. Part of the essential Sec protein translocation apparatus which comprises SecA, SecYEG and auxiliary proteins SecDF-YajC and YidC. The cofactor is Zn(2+).

It is found in the cell inner membrane. The protein resides in the cytoplasm. The catalysed reaction is ATP + H2O + cellular proteinSide 1 = ADP + phosphate + cellular proteinSide 2.. Its function is as follows. Part of the Sec protein translocase complex. Interacts with the SecYEG preprotein conducting channel. Has a central role in coupling the hydrolysis of ATP to the transfer of proteins into and across the cell membrane, serving both as a receptor for the preprotein-SecB complex and as an ATP-driven molecular motor driving the stepwise translocation of polypeptide chains across the membrane. The chain is Protein translocase subunit SecA from Rhizorhabdus wittichii (strain DSM 6014 / CCUG 31198 / JCM 15750 / NBRC 105917 / EY 4224 / RW1) (Sphingomonas wittichii).